A 286-amino-acid chain; its full sequence is Probable tRNA(His) guanylyltransferase (286 aa).

Positions 29, 30, and 76 each coordinate Mg(2+). Residues 29-34 and 75-76 each bind GTP; these read DGKKFH and SD.

This sequence belongs to the tRNA(His) guanylyltransferase family. Mg(2+) is required as a cofactor.

It catalyses the reaction a 5'-end ribonucleotide-tRNA(His) + GTP + ATP + H2O = a 5'-end phospho-guanosine-ribonucleotide-tRNA(His) + AMP + 2 diphosphate + H(+). In terms of biological role, adds a GMP to the 5'-end of tRNA(His) after transcription and RNase P cleavage. The chain is Probable tRNA(His) guanylyltransferase from Drosophila melanogaster (Fruit fly).